The sequence spans 300 residues: Tyrosine recombinase XerC (300 aa).

The Core-binding (CB) domain occupies 2–88; that stretch reads ENVNFTLNLF…SLRSFYKFLL (87 aa). The Tyr recombinase domain occupies 109-294; sequence KIPHFLYPDE…TKDHLRYVYL (186 aa). Residues Arg-149, Lys-173, His-246, Arg-249, and His-272 contribute to the active site. The active-site O-(3'-phospho-DNA)-tyrosine intermediate is Tyr-281.

Belongs to the 'phage' integrase family. XerC subfamily. As to quaternary structure, forms a cyclic heterotetrameric complex composed of two molecules of XerC and two molecules of XerD.

It localises to the cytoplasm. In terms of biological role, site-specific tyrosine recombinase, which acts by catalyzing the cutting and rejoining of the recombining DNA molecules. The XerC-XerD complex is essential to convert dimers of the bacterial chromosome into monomers to permit their segregation at cell division. It also contributes to the segregational stability of plasmids. The polypeptide is Tyrosine recombinase XerC (Anoxybacillus flavithermus (strain DSM 21510 / WK1)).